We begin with the raw amino-acid sequence, 498 residues long: ATP synthase subunit beta, chloroplastic (498 aa).

172–179 is a binding site for ATP; sequence GGAGVGKT.

The protein belongs to the ATPase alpha/beta chains family. As to quaternary structure, F-type ATPases have 2 components, CF(1) - the catalytic core - and CF(0) - the membrane proton channel. CF(1) has five subunits: alpha(3), beta(3), gamma(1), delta(1), epsilon(1). CF(0) has four main subunits: a(1), b(1), b'(1) and c(9-12).

The protein localises to the plastid. The protein resides in the chloroplast thylakoid membrane. It catalyses the reaction ATP + H2O + 4 H(+)(in) = ADP + phosphate + 5 H(+)(out). Its function is as follows. Produces ATP from ADP in the presence of a proton gradient across the membrane. The catalytic sites are hosted primarily by the beta subunits. The polypeptide is ATP synthase subunit beta, chloroplastic (Hyphaene coriacea (Ilala palm)).